The chain runs to 245 residues: Uroporphyrinogen-III C-methyltransferase (245 aa).

Residues proline 12, 87–89 (GGD), 117–118 (TA), methionine 168, alanine 197, and alanine 225 each bind S-adenosyl-L-homocysteine.

It belongs to the precorrin methyltransferase family.

The enzyme catalyses uroporphyrinogen III + 2 S-adenosyl-L-methionine = precorrin-2 + 2 S-adenosyl-L-homocysteine + H(+). Its pathway is cofactor biosynthesis; adenosylcobalamin biosynthesis; precorrin-2 from uroporphyrinogen III: step 1/1. It participates in porphyrin-containing compound metabolism; siroheme biosynthesis; precorrin-2 from uroporphyrinogen III: step 1/1. Its function is as follows. Catalyzes the two successive C-2 and C-7 methylation reactions involved in the conversion of uroporphyrinogen III to precorrin-2 via the intermediate formation of precorrin-1. It is a step in the biosynthesis of both cobalamin (vitamin B12) and siroheme. The protein is Uroporphyrinogen-III C-methyltransferase (cobA) of Pseudomonas aeruginosa (strain ATCC 15692 / DSM 22644 / CIP 104116 / JCM 14847 / LMG 12228 / 1C / PRS 101 / PAO1).